We begin with the raw amino-acid sequence, 297 residues long: MSDYIYPIIAGVIAGIATRLYMLKTDYRQYPTYVHGKVIHIALGLIAAGLGAIIMPALLQEEFTAITFLTLAATQFRDVRNMERNTLTQMDSYELVSRGSTYIEGIAIAFESRNYIVIFTALLTTSAYVFLSIWAAVIAAVVCFLLAMKFMSGSVLKDIVDIEYIKPRFDGPGLFVDNIYMMNIGLPEKQELILKHGMGFILTPKNFNSAATIANLGQRQAILFDVSNVLGVYRDSGEPSLTPIAKRDLNDGRVAVFVLPQIHHPETAVQIISNVPTLENAIRMPTEFIKNQDKVIG.

4 consecutive transmembrane segments (helical) span residues aspartate 3–leucine 23, valine 38–leucine 58, isoleucine 103–leucine 123, and tyrosine 128–methionine 148.

The protein resides in the cell membrane. This is an uncharacterized protein from Bacillus subtilis (strain 168).